The primary structure comprises 268 residues: Tetraspanin-5 (268 aa).

Topologically, residues 1 to 17 are cytoplasmic; it reads MSGKHYKGPEVSCCIKY. The chain crosses the membrane as a helical span at residues 18–38; that stretch reads FIFGFNVIFWFLGITFLGIGL. The Extracellular segment spans residues 39 to 61; that stretch reads WAWNEKGVLSNISSITDLGGFDP. N-linked (GlcNAc...) asparagine glycosylation is present at asparagine 49. The chain crosses the membrane as a helical span at residues 62-82; that stretch reads VWLFLVVGGVMFILGFAGCIG. Residues 83-92 are Cytoplasmic-facing; that stretch reads ALRENTFLLK. A helical transmembrane segment spans residues 93 to 113; sequence FFSVFLGIIFFLELTAGVLAF. The Extracellular segment spans residues 114–232; that stretch reads VFKDWIKDQL…PQFEKWLQDN (119 aa). 4 cysteine pairs are disulfide-bonded: cysteine 153/cysteine 221, cysteine 154/cysteine 186, cysteine 170/cysteine 180, and cysteine 187/cysteine 200. N-linked (GlcNAc...) asparagine glycosylation is found at asparagine 169 and asparagine 174. N-linked (GlcNAc...) asparagine glycosylation is present at asparagine 232. A helical transmembrane segment spans residues 233-253; it reads LTIVAGIFIGIALLQIFGICL. Over 254–268 the chain is Cytoplasmic; that stretch reads AQNLVSDIEAVRASW.

This sequence belongs to the tetraspanin (TM4SF) family. In terms of assembly, interacts with ADAM10; the interaction influences ADAM10 substrate specificity, endocytosis and turnover. In terms of processing, palmitoylated.

It is found in the cell membrane. Its function is as follows. Part of TspanC8 subgroup, composed of 6 members that interact with the transmembrane metalloprotease ADAM10. This interaction is required for ADAM10 exit from the endoplasmic reticulum and for enzymatic maturation and trafficking to the cell surface as well as substrate specificity. Different TspanC8/ADAM10 complexes have distinct substrates. Promotes ADAM10-mediated cleavage of CD44. Seems to regulate VE-cadherin expression in endothelial cells probably through interaction with ADAM10, promoting leukocyte transmigration. In Homo sapiens (Human), this protein is Tetraspanin-5.